The following is a 188-amino-acid chain: Elongation factor P (188 aa).

Position 34 is an N6-(3,6-diaminohexanoyl)-5-hydroxylysine (K34).

The protein belongs to the elongation factor P family. May be beta-lysylated on the epsilon-amino group of Lys-34 by the combined action of EpmA and EpmB, and then hydroxylated on the C5 position of the same residue by EpmC (if this protein is present). Lysylation is critical for the stimulatory effect of EF-P on peptide-bond formation. The lysylation moiety may extend toward the peptidyltransferase center and stabilize the terminal 3-CCA end of the tRNA. Hydroxylation of the C5 position on Lys-34 may allow additional potential stabilizing hydrogen-bond interactions with the P-tRNA.

Its subcellular location is the cytoplasm. The protein operates within protein biosynthesis; polypeptide chain elongation. Involved in peptide bond synthesis. Alleviates ribosome stalling that occurs when 3 or more consecutive Pro residues or the sequence PPG is present in a protein, possibly by augmenting the peptidyl transferase activity of the ribosome. Modification of Lys-34 is required for alleviation. This Citrobacter koseri (strain ATCC BAA-895 / CDC 4225-83 / SGSC4696) protein is Elongation factor P.